Here is a 1187-residue protein sequence, read N- to C-terminus: ATP-dependent DNA helicase MER3 (1187 aa).

Residues 1–41 (MKTKFDRLGTGKRSRPSPNNIDFNDQSATFKRNKKNSRQPS) are disordered. The span at 16–30 (PSPNNIDFNDQSATF) shows a compositional bias: polar residues. The region spanning 148-322 (PSIYESNENC…WLKTNNELPA (175 aa)) is the Helicase ATP-binding domain. 161-168 (SPTGSGKT) is an ATP binding site. Residues 268–271 (DEIH) carry the DEIH box motif. The Helicase C-terminal domain occupies 360 to 542 (KLIEIIEKHA…NLIEHLAAET (183 aa)). The SEC63 domain maps to 616-922 (STAYGNAMTR…PKLEKIEFSI (307 aa)). A C4-type zinc finger spans residues 1039-1054 (CFHSCKDKTQCRHLCC). The interval 1146–1187 (NCPEIIPIDLESSDSYSSNTAASSISDPNGDLDFLGSDIEFE) is disordered. The segment covering 1158–1171 (SDSYSSNTAASSIS) has biased composition (low complexity).

This sequence belongs to the helicase family. SKI2 subfamily. In terms of assembly, oligomerizes. A divalent metal cation serves as cofactor. The cofactor is Zn(2+).

Its subcellular location is the nucleus. The enzyme catalyses Couples ATP hydrolysis with the unwinding of duplex DNA by translocating in the 3'-5' direction.. The catalysed reaction is ATP + H2O = ADP + phosphate + H(+). Functionally, DNA-dependent ATPase and 3'-5' DNA helicase. Required in the control of double strand break transition and crossover during meiosis. ATPase is slightly better stimulated by single-stranded (ss) than double-stranded (ds)DNA. Unwinds Holliday junction (HJ) DNA to Y-DNA and to ssDNA. Efficient unwinding requires 6 nucleotides of 3'-ssDNA; seems to initiate unwinding from blunt ends when they open slightly. Binds HJ, dsDNA, ssDNA and 3'- and 5-overhang DNA. This chain is ATP-dependent DNA helicase MER3, found in Saccharomyces cerevisiae (strain ATCC 204508 / S288c) (Baker's yeast).